The chain runs to 83 residues: Keratin-associated protein 21-2 (83 aa).

Interacts with hair keratins.

In terms of biological role, in the hair cortex, hair keratin intermediate filaments are embedded in an interfilamentous matrix, consisting of hair keratin-associated proteins (KRTAP), which are essential for the formation of a rigid and resistant hair shaft through their extensive disulfide bond cross-linking with abundant cysteine residues of hair keratins. The matrix proteins include the high-sulfur and high-glycine-tyrosine keratins. This Homo sapiens (Human) protein is Keratin-associated protein 21-2 (KRTAP21-2).